Consider the following 1523-residue polypeptide: Dicer-like protein 1 (1523 aa).

Residues 24-38 (LNLSGERTISTTEPT) are compositionally biased toward polar residues. A disordered region spans residues 24–58 (LNLSGERTISTTEPTEGNDSSSEESGDNEQISTQR). Positions 123–304 (LFERAKSQNT…ESATKLEVLL (182 aa)) constitute a Helicase ATP-binding domain. 136–143 (LDTGSGKT) serves as a coordination point for ATP. The DEAH box signature appears at 249-252 (DEAH). The 174-residue stretch at 444–617 (LLRQKLIKYF…GIDSEIDSIL (174 aa)) folds into the Helicase C-terminal domain. Positions 640–730 (ALAILARYAS…NSVYHRRLPA (91 aa)) constitute a Dicer dsRNA-binding fold domain. The region spanning 879–1007 (ELLHLVHENE…VCIEPLRISA (129 aa)) is the PAZ domain. RNase III domains follow at residues 1031–1190 (IALE…LSGG) and 1241–1392 (GRKV…VDSD). Residues glutamate 1281, aspartate 1378, and glutamate 1381 each coordinate Mg(2+). Residues 1426 to 1494 (TFLQNRLTNE…SEKALSVLEN (69 aa)) enclose the DRBM domain. Residues cysteine 1438, histidine 1465, cysteine 1506, and cysteine 1508 each contribute to the Zn(2+) site.

It belongs to the helicase family. Dicer subfamily. Mg(2+) is required as a cofactor. Requires Mn(2+) as cofactor.

In terms of biological role, dicer-like endonuclease involved in cleaving double-stranded RNA in the RNA interference (RNAi) pathway. Produces 21 to 25 bp dsRNAs (siRNAs) which target the selective destruction of homologous RNAs leading to sequence-specific suppression of gene expression, called post-transcriptional gene silencing (PTGS). Part of a broad host defense response against viral infection and transposons. In Aspergillus oryzae (strain ATCC 42149 / RIB 40) (Yellow koji mold), this protein is Dicer-like protein 1 (dcl1).